We begin with the raw amino-acid sequence, 109 residues long: Putative double-stranded DNA mimic protein CKO_01325 (109 aa).

It belongs to the putative dsDNA mimic protein family.

In terms of biological role, may act as a double-stranded DNA (dsDNA) mimic. Probably regulates the activity of a dsDNA-binding protein. This chain is Putative double-stranded DNA mimic protein CKO_01325, found in Citrobacter koseri (strain ATCC BAA-895 / CDC 4225-83 / SGSC4696).